We begin with the raw amino-acid sequence, 188 residues long: Vascular endothelial growth factor A-A (188 aa).

Residues 1-23 (MNLVVYLIQLFLAALLHLSAVKA) form the signal peptide. Cystine bridges form between Cys-49–Cys-91, Cys-80–Cys-125, and Cys-84–Cys-127. An N-linked (GlcNAc...) asparagine glycan is attached at Asn-98.

It belongs to the PDGF/VEGF growth factor family. Homodimer; disulfide-linked. Isoform VEGF165 binds kdr and kdrl. In terms of tissue distribution, predominantly expressed in regions associated with active vascularization. From 15-16 hours post-fertilization (hpf), expressed in the anterior forebrain, the mesoderm underlying and lateral to the anterior hindbrain, the mesoderm underlying and lateral to the posterior hindbrain, and in the ventral medial portions of the somites. By 30-36 hpf, expression in the somites is decreased, while strong expression is observed in the region of the developing glomeruli and in the anterior portion of the pronephric ducts, the pharyngeal arches, and the brain. By 72 hpf, expression remains only in the pronephros region.

It is found in the secreted. Growth factor active in angiogenesis, vasculogenesis and endothelial cell growth. Induces endothelial cell proliferation, promotes cell migration, inhibits apoptosis, and induces permeabilization of blood vessels. Required for intersegmental vessel development in the tail during embryogenesis. Acts both upstream of kdr and tie1 to stimulate endothelial cell differentiation, and upstream of gata1 to stimulate hematopoietic cell differentiation. This is Vascular endothelial growth factor A-A (vegfaa) from Danio rerio (Zebrafish).